The following is a 315-amino-acid chain: Rab effector Noc2 (315 aa).

One can recognise a RabBD domain in the interval 41 to 158 (QRRKQHLSPA…KRSGAWFYKG (118 aa)). The FYVE-type zinc finger occupies 89 to 146 (GNGLSQCLLCGEVLGFLGSSSVFCKDCRKKVCTKCGIEASPGQKRPLWLCKICSEQRE). Zn(2+) is bound by residues Cys95, Cys98, Cys112, Cys115, Cys120, Cys123, Cys138, and Cys141. The segment at 170–315 (GRADDPHFRP…APAGPSSCLG (146 aa)) is disordered. Composition is skewed to basic and acidic residues over residues 184 to 193 (PAEREPRSSE) and 221 to 240 (LEDRLPSTGVRDRKGDKPWK). Positions 262–275 (GCQSSLASGETGTG) are enriched in polar residues. The segment covering 298-315 (GRAPAADAAPAGPSSCLG) has biased composition (low complexity).

In terms of assembly, recruited to dense-core vesicles through specific interaction with RAB27A in endocrine cells. Interacts with RAB3A, RAB3B, RAB3C and RAB3D. Interacts with ZYX. As to expression, moderate to high levels of expression in thyroid, ovary, stomach, heart, pancreas, skeletal muscle, kidney and liver. Also detected in epithelial cells.

The protein resides in the cytoplasm. It is found in the cytoplasmic vesicle. Its subcellular location is the secretory vesicle membrane. Functionally, rab GTPase effector involved in the late steps of regulated exocytosis, both in endocrine and exocrine cells. Acts as a potential RAB3B effector protein in epithelial cells. This chain is Rab effector Noc2 (RPH3AL), found in Homo sapiens (Human).